Reading from the N-terminus, the 464-residue chain is ATP synthase subunit beta 2 (464 aa).

147–154 contacts ATP; that stretch reads GGAGVGKT.

This sequence belongs to the ATPase alpha/beta chains family. F-type ATPases have 2 components, CF(1) - the catalytic core - and CF(0) - the membrane proton channel. CF(1) has five subunits: alpha(3), beta(3), gamma(1), delta(1), epsilon(1). CF(0) has four main subunits: a(1), b(1), b'(1) and c(9-12).

The protein resides in the cell inner membrane. It carries out the reaction ATP + H2O + 4 H(+)(in) = ADP + phosphate + 5 H(+)(out). Produces ATP from ADP in the presence of a proton gradient across the membrane. The catalytic sites are hosted primarily by the beta subunits. This Cereibacter sphaeroides (strain ATCC 17029 / ATH 2.4.9) (Rhodobacter sphaeroides) protein is ATP synthase subunit beta 2.